Here is a 445-residue protein sequence, read N- to C-terminus: Nuclear hormone receptor family member nhr-1 (445 aa).

The tract at residues 19–55 is disordered; that stretch reads PMVNSQRNEDPSMYMNGSAASVSHTNGSSSMGNDQKF. Positions 36–51 are enriched in polar residues; sequence SAASVSHTNGSSSMGN. Residues 70–145 constitute a DNA-binding region (nuclear receptor); it reads GELCAVCSDL…VGMDAKALQI (76 aa). 2 consecutive NR C4-type zinc fingers follow at residues 73-93 and 109-133; these read CAVC…CNGC and CQYN…FNKC. Residues 179–444 enclose the NR LBD domain; the sequence is QDQEIIDQLT…PFVKELCMKR (266 aa).

It belongs to the nuclear hormone receptor family.

It is found in the nucleus. Its function is as follows. Orphan nuclear receptor which acts in concert with the insulin/IGF-1-like signaling (IIS) pathway during osmotic stress, perhaps in response to a ligand modified by the sulfotransferase ssu-1. This is Nuclear hormone receptor family member nhr-1 (nhr-1) from Caenorhabditis elegans.